The primary structure comprises 879 residues: Alanine--tRNA ligase (879 aa).

Residues histidine 567, histidine 571, cysteine 669, and histidine 673 each coordinate Zn(2+).

This sequence belongs to the class-II aminoacyl-tRNA synthetase family. Zn(2+) is required as a cofactor.

The protein resides in the cytoplasm. It carries out the reaction tRNA(Ala) + L-alanine + ATP = L-alanyl-tRNA(Ala) + AMP + diphosphate. Its function is as follows. Catalyzes the attachment of alanine to tRNA(Ala) in a two-step reaction: alanine is first activated by ATP to form Ala-AMP and then transferred to the acceptor end of tRNA(Ala). Also edits incorrectly charged Ser-tRNA(Ala) and Gly-tRNA(Ala) via its editing domain. In Levilactobacillus brevis (strain ATCC 367 / BCRC 12310 / CIP 105137 / JCM 1170 / LMG 11437 / NCIMB 947 / NCTC 947) (Lactobacillus brevis), this protein is Alanine--tRNA ligase.